The following is a 219-amino-acid chain: Mitochondrial fission factor homolog A (219 aa).

The Cytoplasmic segment spans residues 1–199 (MAEINRMQYE…ENKERVKHEM (199 aa)). Positions 164-194 (DLALADAASLRRQIIKLNRRLLLLEEENKER) form a coiled coil. A helical; Anchor for type IV membrane protein transmembrane segment spans residues 200 to 217 (TMYSIIIIFGLLNSWLWL). Residues 218-219 (RR) are Extracellular-facing.

This sequence belongs to the Tango11 family.

The protein resides in the mitochondrion outer membrane. It localises to the peroxisome. The protein localises to the cytoplasmic vesicle. Its subcellular location is the secretory vesicle. It is found in the synaptic vesicle. Its function is as follows. Plays a role in mitochondrial and peroxisomal fission. Promotes the recruitment and association of the fission mediator dynamin-related protein 1 (DNM1L) to the mitochondrial surface. The protein is Mitochondrial fission factor homolog A (mff-a) of Xenopus laevis (African clawed frog).